The chain runs to 493 residues: UDP-N-acetylmuramoyl-L-alanyl-D-glutamate--L-lysine ligase (493 aa).

Ser30 is a binding site for UDP-N-acetyl-alpha-D-muramoyl-L-alanyl-D-glutamate. Position 110–116 (110–116 (GTNGKTS)) interacts with ATP. UDP-N-acetyl-alpha-D-muramoyl-L-alanyl-D-glutamate contacts are provided by residues Asn151, 152–153 (TT), Ser179, and Arg187. Residue Lys219 is modified to N6-carboxylysine. Positions 406-409 (DNPA) match the L-lysine recognition motif motif.

This sequence belongs to the MurCDEF family. MurE subfamily. It depends on Mg(2+) as a cofactor. Post-translationally, carboxylation is probably crucial for Mg(2+) binding and, consequently, for the gamma-phosphate positioning of ATP.

It localises to the cytoplasm. It catalyses the reaction UDP-N-acetyl-alpha-D-muramoyl-L-alanyl-D-glutamate + L-lysine + ATP = UDP-N-acetyl-alpha-D-muramoyl-L-alanyl-gamma-D-glutamyl-L-lysine + ADP + phosphate + H(+). It participates in cell wall biogenesis; peptidoglycan biosynthesis. In terms of biological role, catalyzes the addition of L-lysine to the nucleotide precursor UDP-N-acetylmuramoyl-L-alanyl-D-glutamate (UMAG) in the biosynthesis of bacterial cell-wall peptidoglycan. Cannot use diaminopimelate as substrate. Can accept L-ornithine as substrate, but the efficiency is 400-fold lower than that with L-lysine. Seems to have a role in beta-lactam antibiotic resistance. In Staphylococcus aureus (strain NCTC 8325 / PS 47), this protein is UDP-N-acetylmuramoyl-L-alanyl-D-glutamate--L-lysine ligase.